The following is an 88-amino-acid chain: Small ribosomal subunit protein uS15 (88 aa).

The protein belongs to the universal ribosomal protein uS15 family. In terms of assembly, part of the 30S ribosomal subunit. Forms a bridge to the 50S subunit in the 70S ribosome, contacting the 23S rRNA.

One of the primary rRNA binding proteins, it binds directly to 16S rRNA where it helps nucleate assembly of the platform of the 30S subunit by binding and bridging several RNA helices of the 16S rRNA. Its function is as follows. Forms an intersubunit bridge (bridge B4) with the 23S rRNA of the 50S subunit in the ribosome. The polypeptide is Small ribosomal subunit protein uS15 (Francisella tularensis subsp. holarctica (strain LVS)).